A 469-amino-acid chain; its full sequence is Argininosuccinate lyase (469 aa).

This sequence belongs to the lyase 1 family. Argininosuccinate lyase subfamily.

It is found in the cytoplasm. It carries out the reaction 2-(N(omega)-L-arginino)succinate = fumarate + L-arginine. Its pathway is amino-acid biosynthesis; L-arginine biosynthesis; L-arginine from L-ornithine and carbamoyl phosphate: step 3/3. The sequence is that of Argininosuccinate lyase from Burkholderia orbicola (strain MC0-3).